The primary structure comprises 490 residues: Cytochrome P450 2C54 (490 aa).

The residue at position 127 (serine 127) is a Phosphoserine. N6-acetyllysine occurs at positions 252 and 375. Heme is bound at residue cysteine 435.

The protein belongs to the cytochrome P450 family. Requires heme as cofactor. In terms of tissue distribution, expressed in liver.

It localises to the endoplasmic reticulum membrane. Its subcellular location is the microsome membrane. It carries out the reaction an organic molecule + reduced [NADPH--hemoprotein reductase] + O2 = an alcohol + oxidized [NADPH--hemoprotein reductase] + H2O + H(+). Functionally, metabolizes arachidonic acid mainly to 12-hydroxyeicosatetraenoic acid (HETE). The sequence is that of Cytochrome P450 2C54 from Mus musculus (Mouse).